Consider the following 334-residue polypeptide: Aspartate carbamoyltransferase catalytic subunit (334 aa).

Residues R71 and T72 each coordinate carbamoyl phosphate. K99 provides a ligand contact to L-aspartate. R121, H151, and Q154 together coordinate carbamoyl phosphate. R184 and R239 together coordinate L-aspartate. Residues G280 and P281 each coordinate carbamoyl phosphate.

This sequence belongs to the aspartate/ornithine carbamoyltransferase superfamily. ATCase family. Heterododecamer (2C3:3R2) of six catalytic PyrB chains organized as two trimers (C3), and six regulatory PyrI chains organized as three dimers (R2).

The enzyme catalyses carbamoyl phosphate + L-aspartate = N-carbamoyl-L-aspartate + phosphate + H(+). Its pathway is pyrimidine metabolism; UMP biosynthesis via de novo pathway; (S)-dihydroorotate from bicarbonate: step 2/3. Functionally, catalyzes the condensation of carbamoyl phosphate and aspartate to form carbamoyl aspartate and inorganic phosphate, the committed step in the de novo pyrimidine nucleotide biosynthesis pathway. This is Aspartate carbamoyltransferase catalytic subunit from Pseudomonas putida (strain ATCC 47054 / DSM 6125 / CFBP 8728 / NCIMB 11950 / KT2440).